Here is a 185-residue protein sequence, read N- to C-terminus: Protein GrpE (185 aa).

Over residues 1-12 (MADEQLNEKDLN) the composition is skewed to basic and acidic residues. Residues 1–22 (MADEQLNEKDLNVEETGAGNAA) are disordered.

This sequence belongs to the GrpE family. In terms of assembly, homodimer.

Its subcellular location is the cytoplasm. Its function is as follows. Participates actively in the response to hyperosmotic and heat shock by preventing the aggregation of stress-denatured proteins, in association with DnaK and GrpE. It is the nucleotide exchange factor for DnaK and may function as a thermosensor. Unfolded proteins bind initially to DnaJ; upon interaction with the DnaJ-bound protein, DnaK hydrolyzes its bound ATP, resulting in the formation of a stable complex. GrpE releases ADP from DnaK; ATP binding to DnaK triggers the release of the substrate protein, thus completing the reaction cycle. Several rounds of ATP-dependent interactions between DnaJ, DnaK and GrpE are required for fully efficient folding. The polypeptide is Protein GrpE (Pseudomonas putida (strain ATCC 700007 / DSM 6899 / JCM 31910 / BCRC 17059 / LMG 24140 / F1)).